The sequence spans 223 residues: N-terminal Xaa-Pro-Lys N-methyltransferase 1 (223 aa).

Met-1 carries the N-acetylmethionine modification. Thr-2 carries the post-translational modification N-acetylthreonine; in N-terminal Xaa-Pro-Lys N-methyltransferase 1, N-terminally processed. Residues Gly-69, Arg-74, 91–93 (DVT), 119–120 (LQ), and Gln-135 contribute to the S-adenosyl-L-methionine site.

The protein belongs to the methyltransferase superfamily. NTM1 family.

It localises to the nucleus. It carries out the reaction N-terminal L-alanyl-L-prolyl-L-lysyl-[protein] + 3 S-adenosyl-L-methionine = N-terminal N,N,N-trimethyl-L-alanyl-L-prolyl-L-lysyl-[protein] + 3 S-adenosyl-L-homocysteine + 3 H(+). The catalysed reaction is N-terminal L-seryl-L-prolyl-L-lysyl-[protein] + 3 S-adenosyl-L-methionine = N-terminal N,N,N-trimethyl-L-seryl-L-prolyl-L-lysyl-[protein] + 3 S-adenosyl-L-homocysteine + 3 H(+). It catalyses the reaction N-terminal L-prolyl-L-prolyl-L-lysyl-[protein] + 2 S-adenosyl-L-methionine = N-terminal N,N-dimethyl-L-prolyl-L-prolyl-L-lysyl-[protein] + 2 S-adenosyl-L-homocysteine + 2 H(+). In terms of biological role, distributive alpha-N-methyltransferase that methylates the N-terminus of target proteins containing the N-terminal motif [Ala/Gly/Pro/Ser]-Pro-Lys when the initiator Met is cleaved. Specifically catalyzes mono-, di- or tri-methylation of the exposed alpha-amino group of the Ala, Gly or Ser residue in the [Ala/Gly/Ser]-Pro-Lys motif and mono- or di-methylation of Pro in the Pro-Pro-Lys motif. Some of the substrates may be primed by NTMT2-mediated monomethylation. Catalyzes the trimethylation of the N-terminal Gly in CENPA (after removal of Met-1). Responsible for the N-terminal methylation of KLHL31, MYL2, MYL3, RB1, RCC1, RPL23A and SET. Required during mitosis for normal bipolar spindle formation and chromosome segregation via its action on RCC1. The polypeptide is N-terminal Xaa-Pro-Lys N-methyltransferase 1 (Ntmt1) (Mus musculus (Mouse)).